A 144-amino-acid chain; its full sequence is Large ribosomal subunit protein uL14 (144 aa).

This sequence belongs to the universal ribosomal protein uL14 family. Part of the 50S ribosomal subunit. Forms a cluster with proteins L3 and L24e, part of which may contact the 16S rRNA in 2 intersubunit bridges.

Its function is as follows. Binds to 23S rRNA. Forms part of two intersubunit bridges in the 70S ribosome. This is Large ribosomal subunit protein uL14 from Pyrobaculum arsenaticum (strain DSM 13514 / JCM 11321 / PZ6).